A 122-amino-acid chain; its full sequence is Acidic phospholipase A2 (122 aa).

7 disulfides stabilise this stretch: C26–C115, C28–C44, C43–C95, C49–C122, C50–C88, C57–C81, and C75–C86. Positions 27, 29, and 31 each coordinate Ca(2+). Residue H47 is part of the active site. D48 serves as a coordination point for Ca(2+). The active site involves D89.

May form tetramers. Ca(2+) is required as a cofactor. Expressed by the venom gland.

It is found in the secreted. The catalysed reaction is a 1,2-diacyl-sn-glycero-3-phosphocholine + H2O = a 1-acyl-sn-glycero-3-phosphocholine + a fatty acid + H(+). Functionally, PLA2 catalyzes the calcium-dependent hydrolysis of the 2-acyl groups in 3-sn-phosphoglycerides. In vivo, is non-lethal to mice when intravenously injected up to a concentration of 30 ug, however does show significant edematogenic activity at the injection site. This Lachesis acrochorda (Chocoan bushmaster) protein is Acidic phospholipase A2.